The following is a 239-amino-acid chain: Fatty acid metabolism regulator protein (239 aa).

One can recognise an HTH gntR-type domain in the interval 6–74 (QSPAGFAEEY…HGKPTKVNNF (69 aa)). Positions 34 to 53 (ERELSELIGVTRTTLREVLQ) form a DNA-binding region, H-T-H motif.

Homodimer.

The protein resides in the cytoplasm. Its function is as follows. Multifunctional regulator of fatty acid metabolism. The polypeptide is Fatty acid metabolism regulator protein (Yersinia pseudotuberculosis serotype O:1b (strain IP 31758)).